A 62-amino-acid polypeptide reads, in one-letter code: Large ribosomal subunit protein uL30 (62 aa).

The protein belongs to the universal ribosomal protein uL30 family. In terms of assembly, part of the 50S ribosomal subunit.

This is Large ribosomal subunit protein uL30 from Cereibacter sphaeroides (strain ATCC 17029 / ATH 2.4.9) (Rhodobacter sphaeroides).